The sequence spans 181 residues: RNA pyrophosphohydrolase (181 aa).

Residues 6–149 (GFRPNVGIIL…KRRVYTRALQ (144 aa)) form the Nudix hydrolase domain. Residues 38-59 (GGIKAQETPEEALFRELEEEVG) carry the Nudix box motif. The segment at 159–181 (GLPRQPPVGRPRRSAPPRGCRRA) is disordered. A compositionally biased stretch (basic residues) spans 168–181 (RPRRSAPPRGCRRA).

The protein belongs to the Nudix hydrolase family. RppH subfamily. A divalent metal cation is required as a cofactor.

In terms of biological role, accelerates the degradation of transcripts by removing pyrophosphate from the 5'-end of triphosphorylated RNA, leading to a more labile monophosphorylated state that can stimulate subsequent ribonuclease cleavage. The sequence is that of RNA pyrophosphohydrolase from Alkalilimnicola ehrlichii (strain ATCC BAA-1101 / DSM 17681 / MLHE-1).